The sequence spans 481 residues: 3-isopropylmalate dehydratase large subunit (481 aa).

Positions 357, 417, and 420 each coordinate [4Fe-4S] cluster.

Belongs to the aconitase/IPM isomerase family. LeuC type 1 subfamily. Heterodimer of LeuC and LeuD. [4Fe-4S] cluster is required as a cofactor.

It catalyses the reaction (2R,3S)-3-isopropylmalate = (2S)-2-isopropylmalate. It participates in amino-acid biosynthesis; L-leucine biosynthesis; L-leucine from 3-methyl-2-oxobutanoate: step 2/4. Functionally, catalyzes the isomerization between 2-isopropylmalate and 3-isopropylmalate, via the formation of 2-isopropylmaleate. The sequence is that of 3-isopropylmalate dehydratase large subunit from Mycolicibacterium vanbaalenii (strain DSM 7251 / JCM 13017 / BCRC 16820 / KCTC 9966 / NRRL B-24157 / PYR-1) (Mycobacterium vanbaalenii).